The chain runs to 358 residues: Gentisate 1,2-dioxygenase (358 aa).

The region spanning 239–358 (QTLRQRAEND…AFNFYAEAEP (120 aa)) is the Cupin type-1 domain.

Belongs to the gentisate 1,2-dioxygenase family. Homotetramer.

The catalysed reaction is 2,5-dihydroxybenzoate + O2 = 3-maleylpyruvate + H(+). It functions in the pathway aromatic compound metabolism; naphthalene degradation. Its activity is regulated as follows. Inhibited by 2,2'-dipyridyl. Its function is as follows. Catalyzes the oxygen-dependent ring fission of gentisate between the carboxyl and proximal hydroxyl groups at positions 1 and 2 of the aromatic ring to form maleylpyruvate. No activity with cathechol and protecatechuate as substrates. Part of a 3-hydroxybenzoic acid-degradation pathway. The protein is Gentisate 1,2-dioxygenase (gdoA) of Haloferax sp.